The chain runs to 215 residues: MEIPVDQTEREDITSEKMAQINPLPVHLGPWKITVYDQENFQGKRMEFTSSCANIMECGFDNIRSLKVECGAWIGYEHTSFCGQQFVLERGEYPRWDAWSGSNAYHIERLMSFRPICSANHIESKLVIFEKENFIGRQRELCDDYPSLQAMGWGNNEVGSMKVQCGAWVCYQYPGYRGYQYILESDHHGGEYKHWREWGSHAQTFQIQSIRRIQQ.

Positions 1-30 (MEIPVDQTEREDITSEKMAQINPLPVHLGP) are N-terminal arm. Beta/gamma crystallin 'Greek key' domains lie at 31–70 (WKIT…KVEC) and 71–117 (GAWI…RPIC). A connecting peptide region spans residues 118-123 (SANHIE). 2 consecutive Beta/gamma crystallin 'Greek key' domains span residues 124-165 (SKLV…KVQC) and 166-214 (GAWV…RRIQ).

It belongs to the beta/gamma-crystallin family. As to quaternary structure, homo/heterodimer, or complexes of higher-order. The structure of beta-crystallin oligomers seems to be stabilized through interactions between the N-terminal arms. The N-terminus is blocked.

Its function is as follows. Crystallins are the dominant structural components of the vertebrate eye lens. This is Beta-crystallin A3-1 from Aquarana catesbeiana (American bullfrog).